A 917-amino-acid polypeptide reads, in one-letter code: Chitin synthase 1 (917 aa).

A compositionally biased stretch (basic and acidic residues) spans 1–11 (MAYHGRGDGYD). Residues 1-56 (MAYHGRGDGYDGHQLQDLPGGHNQGDQHDDAQAPFLSENPMPYDNDRLGTDTPPVR) form a disordered region. Over 1-570 (MAYHGRGDGY…YKSGHNIVRM (570 aa)) the chain is Extracellular. N-linked (GlcNAc...) asparagine glycosylation occurs at asparagine 544. The chain crosses the membrane as a helical span at residues 571 to 591 (FFFHVQLIYNIANVIFTWFSL). At 592 to 629 (ASYWLTTTVIMDLVGTPVTASSSSAEHHGWPFGDTVTP) the chain is on the cytoplasmic side. A helical membrane pass occupies residues 630-650 (FFNAVLKYIYLAFVILQFILA). Residues 651 to 664 (LGNRPKGSKWTYIT) lie on the Extracellular side of the membrane. Residues 665–685 (SFFVFSLIQSYILVLSGYLVA) form a helical membrane-spanning segment. The Cytoplasmic portion of the chain corresponds to 686-716 (RAFSVPLDQQLQLDNAKDAMASLFGGSGSAG). The helical transmembrane segment at 717–737 (VILVALVTIYGLYFLASFMYL) threads the bilayer. At 738 to 744 (DPWHMFH) the chain is on the extracellular side. Residues 745 to 765 (SFPYYMLLMSTYINILMIYAF) form a helical membrane-spanning segment. The Cytoplasmic segment spans residues 766–843 (NNWHDVSWGT…DLEDSYKSFR (78 aa)). A helical membrane pass occupies residues 844–864 (TMLVVSWLFSNCLLAVVITSD). The Extracellular segment spans residues 865-884 (NFNTFGIGQTASARTAWFFK). Residues 885 to 905 (FLLFATGALSVIRFIGFCWFL) form a helical membrane-spanning segment. At 906 to 917 (GRTGIMCCFARR) the chain is on the cytoplasmic side.

The protein belongs to the chitin synthase family. Class III subfamily.

Its subcellular location is the cell membrane. The catalysed reaction is [(1-&gt;4)-N-acetyl-beta-D-glucosaminyl](n) + UDP-N-acetyl-alpha-D-glucosamine = [(1-&gt;4)-N-acetyl-beta-D-glucosaminyl](n+1) + UDP + H(+). In terms of biological role, polymerizes chitin, a structural polymer of the cell wall and septum, by transferring the sugar moiety of UDP-GlcNAc to the non-reducing end of the growing chitin polymer. In Neurospora crassa (strain ATCC 24698 / 74-OR23-1A / CBS 708.71 / DSM 1257 / FGSC 987), this protein is Chitin synthase 1 (chs-1).